A 355-amino-acid polypeptide reads, in one-letter code: Peptide chain release factor 1 (355 aa).

Q230 carries the post-translational modification N5-methylglutamine.

It belongs to the prokaryotic/mitochondrial release factor family. Post-translationally, methylated by PrmC. Methylation increases the termination efficiency of RF1.

It localises to the cytoplasm. Its function is as follows. Peptide chain release factor 1 directs the termination of translation in response to the peptide chain termination codons UAG and UAA. The chain is Peptide chain release factor 1 from Geobacter metallireducens (strain ATCC 53774 / DSM 7210 / GS-15).